Here is a 371-residue protein sequence, read N- to C-terminus: tRNA-specific 2-thiouridylase MnmA (371 aa).

Residues 7 to 14 (AMSGGVDS) and leucine 33 each bind ATP. The active-site Nucleophile is the cysteine 101. The cysteines at positions 101 and 213 are disulfide-linked. Position 125 (glycine 125) interacts with ATP. The tract at residues 163 to 165 (KDQ) is interaction with tRNA. Cysteine 213 serves as the catalytic Cysteine persulfide intermediate.

This sequence belongs to the MnmA/TRMU family.

The protein localises to the cytoplasm. It carries out the reaction S-sulfanyl-L-cysteinyl-[protein] + uridine(34) in tRNA + AH2 + ATP = 2-thiouridine(34) in tRNA + L-cysteinyl-[protein] + A + AMP + diphosphate + H(+). Its function is as follows. Catalyzes the 2-thiolation of uridine at the wobble position (U34) of tRNA, leading to the formation of s(2)U34. The protein is tRNA-specific 2-thiouridylase MnmA of Roseiflexus castenholzii (strain DSM 13941 / HLO8).